A 474-amino-acid chain; its full sequence is MPSMKRRKLSHTPPQGEAEDGFSDSETSQASLQETPGNDEKIEATTTKSFKDLGIIDSLCEACDSLGYKAPTQIQAESIPLALQGRDLIGLAETGSGKTAAFALPILQALMDKPQSMFGLVLAPTRELAYQISQQFEALGSLISVRCAVIVGGMDMVSQAIALGKKPHIIVATPGRLLDHLENTKGFSLRSLKYLVMDEADRLLDLDFGPILDKILKVLPKERRTYLFSATMSSKVESLQRASLSNPLRVSVSSNKYQTVSTLLQNCLIIPHKHKDIYLIYLLNEFPGQSVIIFTRTVNETQRLAILLRALGFGAIPLHGQLSQSARLGALGKFRSRSRNILVATDVAARGLDIPSVDLVLNYDLPSDSKTYIHRVGRTARAGKSGRAFSLVTQYDVEIWQRIEAALGKELDEYKVEKEEVMVLSDRVGEAQRHAITEMKELHENRGKKGATLRNRRIGKGAKRSRDEMDREEG.

Basic residues predominate over residues 1 to 10 (MPSMKRRKLS). Residues 1–43 (MPSMKRRKLSHTPPQGEAEDGFSDSETSQASLQETPGNDEKIE) form a disordered region. Over residues 24-36 (DSETSQASLQETP) the composition is skewed to polar residues. The short motif at 48–76 (KSFKDLGIIDSLCEACDSLGYKAPTQIQA) is the Q motif element. The Helicase ATP-binding domain occupies 79-250 (IPLALQGRDL…RASLSNPLRV (172 aa)). Residue 92-99 (AETGSGKT) coordinates ATP. Positions 198–201 (DEAD) match the DEAD box motif. A Helicase C-terminal domain is found at 278 to 422 (YLIYLLNEFP…EYKVEKEEVM (145 aa)). Residues 442-474 (LHENRGKKGATLRNRRIGKGAKRSRDEMDREEG) are disordered. A compositionally biased stretch (basic residues) spans 448–463 (KKGATLRNRRIGKGAK). The span at 464–474 (RSRDEMDREEG) shows a compositional bias: basic and acidic residues.

Belongs to the DEAD box helicase family. DDX47/RRP3 subfamily. As to quaternary structure, interacts with the SSU processome.

Its subcellular location is the nucleus. The enzyme catalyses ATP + H2O = ADP + phosphate + H(+). ATP-dependent rRNA helicase required for pre-ribosomal RNA processing. Involved in the maturation of the 35S-pre-rRNA and to its cleavage to mature 18S rRNA. The chain is ATP-dependent rRNA helicase RRP3 from Coccidioides immitis (strain RS) (Valley fever fungus).